Reading from the N-terminus, the 311-residue chain is MGQRPFSPNHRSGVLNATTAGAVQFNVLGPLELNLRGTKLPLGTPKQRAVLAMLLLSRNQVVAADALVQAIWEKSPPARARRTVHTYICNLRRTLSDAGVDSRNILVSEPPGYRLLIGDRQQCDLDRFVAAKESGLRASAKGYFSEAIRYLDSALQNWRGPVLGDLRSFMFVQMFSRALTEDELLVHTKLAEAAIACGRADVVIPKLERLVAMHPYRESLWKQLMLGYYVNEYQSAAIDAYHRLKSTLAEELGVEPAPTIRALYHKILRQLPMDDLVGRVTRGRVDLRGGNGAKVEELTESDKDLLPIGLA.

Positions 15 to 117 form a DNA-binding region, ompR/PhoB-type; the sequence is LNATTAGAVQ…SEPPGYRLLI (103 aa).

This sequence belongs to the AfsR/DnrI/RedD regulatory family.

Functionally, acts as a positive transcriptional regulator of the molybdopterin biosynthesis moa1 locus, promoting the expression of the moaA1B1C1D1 genes. Binds directly to the moaA1 promoter. The sequence is that of Transcriptional regulatory protein MoaR1 (moaR1) from Mycobacterium tuberculosis (strain ATCC 25618 / H37Rv).